Here is a 488-residue protein sequence, read N- to C-terminus: DELTA-alicitoxin-Pse2b (488 aa).

The N-terminal stretch at 1-21 is a signal peptide; it reads MSKPIIFLLTAFVVLTDLGAT. The 321-residue stretch at 24-344 folds into the MACPF domain; sequence TEKVEVKAKP…GYLNFDCAYE (321 aa). The region spanning 369 to 398 is the EGF-like domain; the sequence is VCKLGPEGCHSDDDCESDDLIYCACCGDSC. 3 disulfides stabilise this stretch: Cys370–Cys383, Cys377–Cys391, and Cys393–Cys398.

The protein localises to the secreted. The protein resides in the nematocyst. Causes lethal toxicity to the shrimp Palaemon paucidence, and hemolytic activity toward sheep red blood cells. This chain is DELTA-alicitoxin-Pse2b, found in Phyllodiscus semoni (Night anemone).